Consider the following 269-residue polypeptide: Protein BASIC PENTACYSTEINE3 (269 aa).

Belongs to the BBR/BPC family. In terms of tissue distribution, expressed in seedlings, leaves and pistils. Detected in the base of flowers and tips of carpels, in petal vasculature, in anthers, in young rosette, in the lateral and primary roots, and in the gynobasal portion of the ovule.

It localises to the nucleus. Its function is as follows. Transcriptional regulator that specifically binds to GA-rich elements (GAGA-repeats) present in regulatory sequences of genes involved in developmental processes. The chain is Protein BASIC PENTACYSTEINE3 (BPC3) from Arabidopsis thaliana (Mouse-ear cress).